The sequence spans 313 residues: uncharacterized protein (313 aa).

The next 2 membrane-spanning stretches (helical) occupy residues 42–64 (LVVL…LFLT) and 74–96 (VRAY…TLYV).

The protein resides in the cell membrane. This is an uncharacterized protein from Treponema pallidum (strain Nichols).